Reading from the N-terminus, the 513-residue chain is tRNA A64-2'-O-ribosylphosphate transferase (513 aa).

Functionally, tRNA backbone modifying enzyme that mediates initiator/ elongator tRNA discrimination. This enzyme modifies exclusively the initiator tRNA in position 64 using 5'-phosphoribosyl-1'-pyrophosphate as the modification donor. Recognize the stem-loop IV region that is unique in eukaryotic cytoplasmic initiator tRNAs. This chain is tRNA A64-2'-O-ribosylphosphate transferase (RIT1), found in Saccharomyces cerevisiae (strain ATCC 204508 / S288c) (Baker's yeast).